The sequence spans 130 residues: Small ribosomal subunit protein uS11c (130 aa).

This sequence belongs to the universal ribosomal protein uS11 family. In terms of assembly, part of the 30S ribosomal subunit.

It is found in the plastid. The protein localises to the chloroplast. This chain is Small ribosomal subunit protein uS11c, found in Pinus thunbergii (Japanese black pine).